The primary structure comprises 185 residues: Probable chorismate pyruvate-lyase (185 aa).

Positions 84, 122, and 178 each coordinate substrate.

It belongs to the UbiC family.

The protein localises to the cytoplasm. It carries out the reaction chorismate = 4-hydroxybenzoate + pyruvate. It participates in cofactor biosynthesis; ubiquinone biosynthesis. In terms of biological role, removes the pyruvyl group from chorismate, with concomitant aromatization of the ring, to provide 4-hydroxybenzoate (4HB) for the ubiquinone pathway. The polypeptide is Probable chorismate pyruvate-lyase (Hydrogenovibrio crunogenus (strain DSM 25203 / XCL-2) (Thiomicrospira crunogena)).